The following is a 136-amino-acid chain: Peptide methionine sulfoxide reductase MsrB (136 aa).

The MsrB domain occupies Ser-7–Asp-129. Positions 46, 49, 95, and 98 each coordinate Zn(2+). The Nucleophile role is filled by Cys-118.

Belongs to the MsrB Met sulfoxide reductase family. Requires Zn(2+) as cofactor.

It carries out the reaction L-methionyl-[protein] + [thioredoxin]-disulfide + H2O = L-methionyl-(R)-S-oxide-[protein] + [thioredoxin]-dithiol. This chain is Peptide methionine sulfoxide reductase MsrB, found in Erwinia tasmaniensis (strain DSM 17950 / CFBP 7177 / CIP 109463 / NCPPB 4357 / Et1/99).